We begin with the raw amino-acid sequence, 261 residues long: MIIAKNIEQFNLLRESFTKDRKIGFVPTMGALHNGHICLIKKAKSENDVTIVSIFVNPTQFNNPNDYQTYPNQLQQDIQILESLDVDILFNPSEKDIYPDGNLLRIQPELEIANILEGKARPGHFSGMLTVVLKLLQITKPDNLYLGEKDYQQVMLIKQLVKDFFIKTKVIVCSTQRQATGLPLSSRNKNLTSADIEIANKVYEILRQDNFLDLEELTNKINSTGARTEYIQKINNRIFLALYISKVRLIDNFLKETGPSC.

29 to 36 provides a ligand contact to ATP; that stretch reads MGALHNGH. His-36 acts as the Proton donor in catalysis. Gln-60 is a (R)-pantoate binding site. Gln-60 lines the beta-alanine pocket. 147-150 contacts ATP; the sequence is GEKD. Residue Gln-153 participates in (R)-pantoate binding. Residue 184 to 187 participates in ATP binding; sequence LSSR.

Belongs to the pantothenate synthetase family. Homodimer.

Its subcellular location is the cytoplasm. It carries out the reaction (R)-pantoate + beta-alanine + ATP = (R)-pantothenate + AMP + diphosphate + H(+). The protein operates within cofactor biosynthesis; (R)-pantothenate biosynthesis; (R)-pantothenate from (R)-pantoate and beta-alanine: step 1/1. Its function is as follows. Catalyzes the condensation of pantoate with beta-alanine in an ATP-dependent reaction via a pantoyl-adenylate intermediate. The polypeptide is Pantothenate synthetase (Francisella philomiragia subsp. philomiragia (strain ATCC 25017 / CCUG 19701 / FSC 153 / O#319-036)).